A 365-amino-acid chain; its full sequence is G-protein coupled receptor 68 (365 aa).

Topologically, residues 1 to 12 (MGNITADNSSMS) are extracellular. Residues Asn-3 and Asn-8 are each glycosylated (N-linked (GlcNAc...) asparagine). The chain crosses the membrane as a helical span at residues 13–49 (CTIDHTIHQTLAPVVYVTVLVVGFPANCLSLYFGYLQ). 2 disulfides stabilise this stretch: Cys-13-Cys-258 and Cys-94-Cys-172. The Cytoplasmic segment spans residues 50 to 53 (IKAR). Residues 54 to 84 (NELGVYLCNLTVADLFYICSLPFWLQYVLQH) form a helical membrane-spanning segment. Residues 85–89 (DNWSH) lie on the Extracellular side of the membrane. A helical membrane pass occupies residues 90–125 (GDLSCQVCGILLYENIYISVGFLCCISVDRYLAVAH). At 126–133 (PFRFHQFR) the chain is on the cytoplasmic side. A helical transmembrane segment spans residues 134–160 (TLKAAVGVSVVIWAKELLTSIYFLMHE). Topologically, residues 161–176 (EVIEDENQHRVCFEHY) are extracellular. Residues 161–176 (EVIEDENQHRVCFEHY) are extracellular loop 2 (ECL2). A helical transmembrane segment spans residues 177-214 (PIQAWQRAINYYRFLVGFLFPICLLLASYQGILRAVRR). Residues 215-218 (SHGT) lie on the Cytoplasmic side of the membrane. A helical membrane pass occupies residues 219–254 (QKSRKDQIQRLVLSTVVIFLACFLPYHVLLLVRSVW). At 255–260 (EASCDF) the chain is on the extracellular side. Residues 261 to 289 (AKGVFNAYHFSLLLTSFNCVADPVLYCFV) traverse the membrane as a helical segment. Topologically, residues 290-365 (SETTHRDLAR…SGGFPTGRLA (76 aa)) are cytoplasmic. The tract at residues 345 to 365 (HPAFQTPNSPGSGGFPTGRLA) is disordered. Positions 355 to 365 (GSGGFPTGRLA) are enriched in gly residues.

It belongs to the G-protein coupled receptor 1 family. Found at low level in a wide range of tissues, but significantly expressed in lung, kidney, bone and nervous system.

The protein localises to the cell membrane. Activated by a network of residues that connects an extracellular-facing cavity to Glu-149, a conserved charged residue buried in the transmembrane core of the receptor. Protonation likely drives conformational changes in extracellular loop 2 (ECL2), which stabilizes movement of transmembrane 3 (TM3) and a series of rearrangements that connect the extracellular-facing cavity to Glu-149, a residue only conserved in proton-sensing G-protein coupled receptors. Activated in an allosteric manner by divalent metal ions at the extracellular surface following the order: Cd(2+) &gt; Co(2+) &gt; Ni(2+) &gt; Zn(2+) &gt; Fe(2+) &gt; Ca(2+) &gt; Mg(2+). Activated by the benzodiazepine drug lorazepam, a non-selective GPR68 positive allosteric modulator. Activated by ogerin (ZINC67740571), a selective GPR68 positive allosteric modulator. Activated by small molecule MS48107, a selective positive allosteric modulator. Inhibited by small molecule ogremorphin, inducing ferroptosis in cancer cells. Proton-sensing G-protein coupled receptor activated by extracellular pH, which is required to monitor pH changes and generate adaptive reactions. The receptor is almost silent at pH 7.8 but fully activated at pH 6.8. Ligand binding causes a conformation change that triggers signaling via guanine nucleotide-binding proteins (G proteins) and modulates the activity of downstream effectors, such as phospholipase C. GPR68 is mainly coupled to G(q) G proteins and mediates production of diacylglycerol (DAG) and inositol 1,4,5-trisphosphate (IP3). Acts as a key mechanosensor of fluid shear stress and membrane stretch. Expressed in endothelial cells of small-diameter resistance arteries, where it mediates flow-induced dilation in response to shear stress. May represents an osteoblastic pH sensor regulating cell-mediated responses to acidosis in bone. Acts as a regulator of calcium-sensing receptor CASR in a seesaw manner: GPR68-mediated signaling inhibits CASR signaling in response to protons, while CASR inhibits GPR68 in presence of extracellular calcium. The polypeptide is G-protein coupled receptor 68 (Homo sapiens (Human)).